A 198-amino-acid chain; its full sequence is tRNA (pseudouridine(54)-N(1))-methyltransferase (198 aa).

S-adenosyl-L-methionine is bound by residues L130, G153, L176–L181, and C186.

The protein belongs to the methyltransferase superfamily. TrmY family. Homodimer.

It is found in the cytoplasm. The enzyme catalyses pseudouridine(54) in tRNA + S-adenosyl-L-methionine = N(1)-methylpseudouridine(54) in tRNA + S-adenosyl-L-homocysteine + H(+). Its function is as follows. Specifically catalyzes the N1-methylation of pseudouridine at position 54 (Psi54) in tRNAs. The protein is tRNA (pseudouridine(54)-N(1))-methyltransferase of Methanococcus maripaludis (strain C6 / ATCC BAA-1332).